The primary structure comprises 134 residues: MIMPQSRLDVADNSGAREIMCIRVLNSGIGGKGLTTGGGGNKRYAHVGDIIVASVKDAAPRGAVKAGDVVKAVVVRTSHAIKRADGSTIRFDRNAAVIINNQGEPRGTRVFGPVARELRDRRFMKIVSLAPEVL.

Belongs to the universal ribosomal protein uL14 family. As to quaternary structure, in the 70S ribosome, L14 and L19 interact and together make contacts with the 16S rRNA in bridges B5 and B8. Part of the 50S ribosomal subunit. Forms a cluster with proteins L3 and L19.

Functionally, forms part of two intersubunit bridges in the 70S ribosome. Binds to 23S rRNA. The chain is Large ribosomal subunit protein uL14 from Deinococcus radiodurans (strain ATCC 13939 / DSM 20539 / JCM 16871 / CCUG 27074 / LMG 4051 / NBRC 15346 / NCIMB 9279 / VKM B-1422 / R1).